The chain runs to 305 residues: tRNA dimethylallyltransferase 2 (305 aa).

14–21 (GPTASGKT) contributes to the ATP binding site. Residue 16-21 (TASGKT) coordinates substrate. The interaction with substrate tRNA stretch occupies residues 39 to 42 (DSRQ).

The protein belongs to the IPP transferase family. Monomer. Requires Mg(2+) as cofactor.

It carries out the reaction adenosine(37) in tRNA + dimethylallyl diphosphate = N(6)-dimethylallyladenosine(37) in tRNA + diphosphate. Catalyzes the transfer of a dimethylallyl group onto the adenine at position 37 in tRNAs that read codons beginning with uridine, leading to the formation of N6-(dimethylallyl)adenosine (i(6)A). The chain is tRNA dimethylallyltransferase 2 from Trichlorobacter lovleyi (strain ATCC BAA-1151 / DSM 17278 / SZ) (Geobacter lovleyi).